A 387-amino-acid polypeptide reads, in one-letter code: Succinate--CoA ligase [ADP-forming] subunit beta (387 aa).

Residues 9–243 (KEILSTYGIP…YSQLDPLEIT (235 aa)) form the ATP-grasp domain. ATP-binding positions include Lys45, 52-54 (GRG), Glu98, Val101, and Glu106. Residues Asn198 and Asp212 each coordinate Mg(2+). Substrate is bound by residues Asn263 and 320–322 (GIM).

The protein belongs to the succinate/malate CoA ligase beta subunit family. As to quaternary structure, heterotetramer of two alpha and two beta subunits. The cofactor is Mg(2+).

It catalyses the reaction succinate + ATP + CoA = succinyl-CoA + ADP + phosphate. The catalysed reaction is GTP + succinate + CoA = succinyl-CoA + GDP + phosphate. It participates in carbohydrate metabolism; tricarboxylic acid cycle; succinate from succinyl-CoA (ligase route): step 1/1. In terms of biological role, succinyl-CoA synthetase functions in the citric acid cycle (TCA), coupling the hydrolysis of succinyl-CoA to the synthesis of either ATP or GTP and thus represents the only step of substrate-level phosphorylation in the TCA. The beta subunit provides nucleotide specificity of the enzyme and binds the substrate succinate, while the binding sites for coenzyme A and phosphate are found in the alpha subunit. This Trichlorobacter lovleyi (strain ATCC BAA-1151 / DSM 17278 / SZ) (Geobacter lovleyi) protein is Succinate--CoA ligase [ADP-forming] subunit beta.